Reading from the N-terminus, the 526-residue chain is Tyrosine 2,3-aminomutase (526 aa).

The active-site Proton donor/acceptor is Tyr-41. His-71 is a substrate binding site. Positions 130-132 form a cross-link, 5-imidazolinone (Ala-Gly); that stretch reads ASG. Position 131 is a 2,3-didehydroalanine (Ser) (Ser-131). The substrate site is built by Asn-183 and Arg-288.

It belongs to the TAL/TAM family. Homotetramer; dimer of dimers. Contains an active site 4-methylidene-imidazol-5-one (MIO), which is formed autocatalytically by cyclization and dehydration of residues Ala-Ser-Gly.

The enzyme catalyses L-tyrosine = 3-amino-3-(4-hydroxyphenyl)propanoate. It carries out the reaction L-tyrosine = (E)-4-coumarate + NH4(+). In terms of biological role, has aminomutase and, to a much lesser extent, ammonia-lyase activity. Primarily, catalyzes the rearrangement of L-tyrosine to S-beta-tyrosine, which is probably incorporated into secondary metabolite myxovalargin. The aminomutase activity exclusively produces S-beta-tyrosine. The protein is Tyrosine 2,3-aminomutase of Myxococcus fulvus.